A 542-amino-acid chain; its full sequence is Gamma-terpinene synthase 1 (542 aa).

Mn(2+) contacts are provided by Asp-295 and Asp-299. The DDXXD motif motif lies at 295-299 (DDVYD). 2 homodimerization regions span residues 301–307 (YDTLDEL) and 373–410 (EAKW…FTLP). Mn(2+) contacts are provided by Asp-439 and Glu-447.

This sequence belongs to the terpene synthase family. In terms of assembly, homodimer. The cofactor is Mn(2+). Mg(2+) serves as cofactor. As to expression, mostly expressed in flowers and, to a lower extent, in leaves, especially in glandular trichomes.

The enzyme catalyses (2E)-geranyl diphosphate = gamma-terpinene + diphosphate. The catalysed reaction is (2E)-geranyl diphosphate = alpha-terpinene + diphosphate. It participates in secondary metabolite biosynthesis; terpenoid biosynthesis. Functionally, involved in the biosynthesis of phenolic monoterpenes natural products thymol and carvacrol which have a broad range of biological activities acting as antimicrobial compounds, insecticides, antioxidants and pharmaceutical agents. Monoterpene synthase which catalyzes the conversion of geranyl diphosphate (GPP) to gamma-terpinene and the minor products alpha-thujene, alpha-terpinene, myrcene, sabinene, (+)-R-limonene, alpha-pinene and alpha-phellandrene. In Thymus vulgaris (Thyme), this protein is Gamma-terpinene synthase 1.